A 312-amino-acid chain; its full sequence is Ribonuclease Z (312 aa).

Zn(2+)-binding residues include His-63, His-65, Asp-67, His-68, His-141, Asp-212, and His-270. Catalysis depends on Asp-67, which acts as the Proton acceptor.

This sequence belongs to the RNase Z family. In terms of assembly, homodimer. The cofactor is Zn(2+).

The enzyme catalyses Endonucleolytic cleavage of RNA, removing extra 3' nucleotides from tRNA precursor, generating 3' termini of tRNAs. A 3'-hydroxy group is left at the tRNA terminus and a 5'-phosphoryl group is left at the trailer molecule.. Zinc phosphodiesterase, which displays some tRNA 3'-processing endonuclease activity. Probably involved in tRNA maturation, by removing a 3'-trailer from precursor tRNA. The sequence is that of Ribonuclease Z from Latilactobacillus sakei subsp. sakei (strain 23K) (Lactobacillus sakei subsp. sakei).